The sequence spans 200 residues: Dual specificity tyrosine-phosphorylation-regulated kinase 1A (200 aa).

The residue at position 41 (Tyr-41) is a Phosphotyrosine; by autocatalysis. Lys-58 contributes to the ATP binding site. The residue at position 76 (Tyr-76) is a Phosphotyrosine; by autocatalysis. Position 88 is a phosphoserine; by autocatalysis (Ser-88). Thr-122 is modified (phosphothreonine; by autocatalysis).

The protein belongs to the protein kinase superfamily. CMGC Ser/Thr protein kinase family. MNB/DYRK subfamily. Interacts with RAD54L2/ARIP4. Interacts with CRY2. Interacts with RANBP9. Interacts with WDR68. Interacts with SIRT1. In terms of processing, can also autophosphorylate on serine and threonine residues (in vitro). Autophosphorylated on numerous tyrosine residues.

The protein localises to the nucleus. The enzyme catalyses L-tyrosyl-[protein] + ATP = O-phospho-L-tyrosyl-[protein] + ADP + H(+). It catalyses the reaction L-seryl-[protein] + ATP = O-phospho-L-seryl-[protein] + ADP + H(+). The catalysed reaction is L-threonyl-[protein] + ATP = O-phospho-L-threonyl-[protein] + ADP + H(+). It carries out the reaction [DNA-directed RNA polymerase] + ATP = phospho-[DNA-directed RNA polymerase] + ADP + H(+). Inhibited by RANBP9. Functionally, dual-specificity kinase which possesses both serine/threonine and tyrosine kinase activities. Exhibits a substrate preference for proline at position P+1 and arginine at position P-3. Plays an important role in double-strand breaks (DSBs) repair following DNA damage. Mechanistically, phosphorylates RNF169 and increases its ability to block accumulation of TP53BP1 at the DSB sites thereby promoting homologous recombination repair (HRR). Also acts as a positive regulator of transcription by acting as a CTD kinase that mediates phosphorylation of the CTD (C-terminal domain) of the large subunit of RNA polymerase II (RNAP II) POLR2A. May play a role in a signaling pathway regulating nuclear functions of cell proliferation. Modulates alternative splicing by phosphorylating the splice factor SRSF6. Has pro-survival function and negatively regulates the apoptotic process. Promotes cell survival upon genotoxic stress through phosphorylation of SIRT1. This in turn inhibits p53/TP53 activity and apoptosis. Phosphorylates SEPTIN4, SEPTIN5 and SF3B1 at 'Thr-434'. The sequence is that of Dual specificity tyrosine-phosphorylation-regulated kinase 1A from Oryctolagus cuniculus (Rabbit).